A 410-amino-acid chain; its full sequence is Exopolygalacturonase (410 aa).

The N-terminal stretch at 1-22 (MACIDNAMRALFLLALFCVVHG) is a signal peptide. Residues Asn89 and Asn201 are each glycosylated (N-linked (GlcNAc...) asparagine). PbH1 repeat units lie at residues 192–218 (CKDM…HMGD), 219–240 (SSGV…SIGP), 242–262 (TSKV…SIGS), 272–293 (VTDI…RIKA), and 337–377 (ASKV…TMDD). The active-site Proton donor is Asp233. A disulfide bridge links Cys235 with Cys252. Asn246 is a glycosylation site (N-linked (GlcNAc...) asparagine). His256 is an active-site residue. An N-linked (GlcNAc...) asparagine glycan is attached at Asn349. Residues Cys364 and Cys370 are joined by a disulfide bond. The N-linked (GlcNAc...) asparagine glycan is linked to Asn387. Cys393 and Cys409 form a disulfide bridge.

It belongs to the glycosyl hydrolase 28 family. Pollen.

The protein resides in the secreted. It localises to the cell wall. The catalysed reaction is [(1-&gt;4)-alpha-D-galacturonosyl](n) + H2O = alpha-D-galacturonate + [(1-&gt;4)-alpha-D-galacturonosyl](n-1). In terms of biological role, may function in depolymerizing pectin during pollen development, germination, and tube growth. Acts as an exo-polygalacturonase. The sequence is that of Exopolygalacturonase (PG2C) from Zea mays (Maize).